Consider the following 153-residue polypeptide: MGSLVQGDDFQHILRLLNTNVDGKNKIMYAMTAIRGIGRRFSNLVCKKAEVDLRKAAGECSADELERMMGIVANPRAYKIPDWFLNRQKDHKTGRFSQLTSSQLDTVMRDDLERLKKIRGHRGLRHYWGLRVRGQHTKTTGRAGKTVGVAKKK.

The protein belongs to the universal ribosomal protein uS13 family.

The protein localises to the cytoplasm. Located at the top of the head of the 40S subunit, it contacts several helices of the 18S rRNA. This is Small ribosomal subunit protein uS13 (RPS18) from Chlamydomonas reinhardtii (Chlamydomonas smithii).